We begin with the raw amino-acid sequence, 149 residues long: Calmodulin-1 (149 aa).

A2 carries the post-translational modification N-acetylalanine. EF-hand domains lie at 8 to 43, 44 to 79, 81 to 116, and 117 to 149; these read EQIA…LGQN, PTEA…KMKD, DSEE…LGEK, and LTDE…MLAK. Residues D21, D23, D25, C27, E32, D57, D59, N61, T63, E68, D94, D96, N98, and E105 each coordinate Ca(2+). K116 is subject to N6,N6,N6-trimethyllysine. Ca(2+) is bound by residues D130, D132, D134, Q136, and E141.

Belongs to the calmodulin family. In terms of tissue distribution, high expression in stolon tips and stems, moderate in roots, and very low in leaves. Localized in the meristematic regions of the shoot and root tips, the tip of the developing tuber and the vascular zones of petiole and tuber. Not detected in mesophyll cells.

In terms of biological role, calmodulin mediates the control of a large number of enzymes, ion channels and other proteins by Ca(2+). Among the enzymes to be stimulated by the calmodulin-Ca(2+) complex are a number of protein kinases and phosphatases. This chain is Calmodulin-1 (PCM1), found in Solanum tuberosum (Potato).